The following is a 183-amino-acid chain: Pentapeptide repeat protein MfpA (183 aa).

The Pentapeptide repeat domain occupies 113–147 (SLVDTDLRKCVLRGADLSGARTTGARLDDADLRGA).

Belongs to the pentapeptide repeat protein family. As to quaternary structure, homodimer. Probably interacts with DNA gyrase.

Might be involved in fluoroquinolone resistance. Inhibits ATP-independent DNA relaxation, ATP-dependent DNA supercoiling and ATP-dependent decatenation by endogenous gyrase, 50% inhibition occurs at 2 uM; inhibition is abolished if GyrA is mutated (Asp-87 to Gly or His). Also inhibits fluoroquinolone-promoted dsDNA cleavage. Increases fluoroquinolone (ciprofloxacin or moxifloxacin) inhibition of gyrase supercoiling activity in a concentration-dependent manner. Inhibits DNA relaxation and supercoiling by E.coli gyrase. Forms a structure that exhibits size, shape and electrostatic similarity to B-form DNA; it may bind to DNA gyrase which is postulated to protect it from fluoroquinolones. This chain is Pentapeptide repeat protein MfpA, found in Mycobacterium tuberculosis (strain ATCC 25618 / H37Rv).